The primary structure comprises 529 residues: MTDLSPVRRALLSVSDKTGLIELGQALAARGVELLSTGGTAKALRDAGLTVRDVAEVTGFPEMMDGRVKTLHPMVHGGLLALRDNADHVAAMEQHGIAGIDLLVVNLYPFEATVAKGADYDDCIENIDIGGPAMIRAASKNHAFVNVVVDVADYDALLAEMAANDGQTSYAFRQRLAQTAYARTAAYDAAVSNWMADQLALEAPRRRAFAGELKQTLRYGENSHQQAAFYTDGSNRPGVATARQLQGKELSYNNINDTDAAFELVAEFAPENGPACAIIKHANPCGVALGATLSEAYQKAFDCDRTSAFGGIVALNQPLDAETAGKIVEIFTEVVIAPGASDEAIAIFATKKNLRLLLTDGLPDPRQPIVAMKQVAGGLLVQDKDVGHVDLTDLKVVTRKAPTEAQMADLLFAWKVGKHVKSNAIVYVKDGATVGVGAGQMSRLDSANVAAAKAQRMATELGLPESPAKGCAVASDAFFPFADGLLEAAAAGGACVIQPGGSMRDDEVIKAADEAGLAMVFTGMRHFRH.

In terms of domain architecture, MGS-like spans 2–149 (TDLSPVRRAL…KNHAFVNVVV (148 aa)).

Belongs to the PurH family.

The catalysed reaction is (6R)-10-formyltetrahydrofolate + 5-amino-1-(5-phospho-beta-D-ribosyl)imidazole-4-carboxamide = 5-formamido-1-(5-phospho-D-ribosyl)imidazole-4-carboxamide + (6S)-5,6,7,8-tetrahydrofolate. It catalyses the reaction IMP + H2O = 5-formamido-1-(5-phospho-D-ribosyl)imidazole-4-carboxamide. The protein operates within purine metabolism; IMP biosynthesis via de novo pathway; 5-formamido-1-(5-phospho-D-ribosyl)imidazole-4-carboxamide from 5-amino-1-(5-phospho-D-ribosyl)imidazole-4-carboxamide (10-formyl THF route): step 1/1. It participates in purine metabolism; IMP biosynthesis via de novo pathway; IMP from 5-formamido-1-(5-phospho-D-ribosyl)imidazole-4-carboxamide: step 1/1. This Ruegeria pomeroyi (strain ATCC 700808 / DSM 15171 / DSS-3) (Silicibacter pomeroyi) protein is Bifunctional purine biosynthesis protein PurH.